The sequence spans 201 residues: Recombination protein RecR (201 aa).

Residues 60-75 (CSVCGNVDTSDPCTIC) form a C4-type zinc finger. One can recognise a Toprim domain in the interval 83-178 (ATLIVVEDVS…RVTKLAHGVP (96 aa)).

Belongs to the RecR family.

Its function is as follows. May play a role in DNA repair. It seems to be involved in an RecBC-independent recombinational process of DNA repair. It may act with RecF and RecO. This is Recombination protein RecR from Chelativorans sp. (strain BNC1).